We begin with the raw amino-acid sequence, 582 residues long: tRNA-guanine(15) transglycosylase (582 aa).

D95 functions as the Nucleophile in the catalytic mechanism. Residues D130 and G196 each coordinate substrate. C279, C281, and C284 together coordinate Zn(2+). A PUA domain is found at R507–E582.

It belongs to the archaeosine tRNA-ribosyltransferase family. As to quaternary structure, homodimer. Requires Zn(2+) as cofactor.

It carries out the reaction guanosine(15) in tRNA + 7-cyano-7-deazaguanine = 7-cyano-7-carbaguanosine(15) in tRNA + guanine. It functions in the pathway tRNA modification; archaeosine-tRNA biosynthesis. Functionally, exchanges the guanine residue with 7-cyano-7-deazaguanine (preQ0) at position 15 in the dihydrouridine loop (D-loop) of archaeal tRNAs. This chain is tRNA-guanine(15) transglycosylase (tgtA), found in Pyrococcus horikoshii (strain ATCC 700860 / DSM 12428 / JCM 9974 / NBRC 100139 / OT-3).